The chain runs to 341 residues: Ketol-acid reductoisomerase (NADP(+)) (341 aa).

Positions 1-182 (MATIYYDKDA…GCTRAGVLET (182 aa)) constitute a KARI N-terminal Rossmann domain. NADP(+) is bound by residues 25–28 (YGSQ), S51, S53, and 83–86 (DQTQ). H108 is an active-site residue. G134 contributes to the NADP(+) binding site. Positions 183–328 (TFKEETETDL…KRLRDMMSWI (146 aa)) constitute a KARI C-terminal knotted domain. D191, E195, E227, and E231 together coordinate Mg(2+). Residue S252 coordinates substrate.

Belongs to the ketol-acid reductoisomerase family. Mg(2+) serves as cofactor.

It catalyses the reaction (2R)-2,3-dihydroxy-3-methylbutanoate + NADP(+) = (2S)-2-acetolactate + NADPH + H(+). The catalysed reaction is (2R,3R)-2,3-dihydroxy-3-methylpentanoate + NADP(+) = (S)-2-ethyl-2-hydroxy-3-oxobutanoate + NADPH + H(+). Its pathway is amino-acid biosynthesis; L-isoleucine biosynthesis; L-isoleucine from 2-oxobutanoate: step 2/4. The protein operates within amino-acid biosynthesis; L-valine biosynthesis; L-valine from pyruvate: step 2/4. Functionally, involved in the biosynthesis of branched-chain amino acids (BCAA). Catalyzes an alkyl-migration followed by a ketol-acid reduction of (S)-2-acetolactate (S2AL) to yield (R)-2,3-dihydroxy-isovalerate. In the isomerase reaction, S2AL is rearranged via a Mg-dependent methyl migration to produce 3-hydroxy-3-methyl-2-ketobutyrate (HMKB). In the reductase reaction, this 2-ketoacid undergoes a metal-dependent reduction by NADPH to yield (R)-2,3-dihydroxy-isovalerate. This chain is Ketol-acid reductoisomerase (NADP(+)), found in Anaeromyxobacter sp. (strain K).